Here is a 402-residue protein sequence, read N- to C-terminus: MSRRLFTSESVTEGHPDKIADQISDTILDALLREDPTSRVAVETLITTGLVHVAGEVTTKAYAPIAQLVRDKILEIGYDSSKKGFDGASCGVSVSIGSQSPDIAQGVDTAYENRVEGDEDELDRQGAGDQGLMFGYATDETPTLMPLPIHLAHRLSHRLSEVRKNGTIPYLRPDGKTQVTIEYDGDKAVRLDTVVVSSQHASDIDLDSLLAPDIREFVVEPELKALLDDGIKLETEGYRLLVNPTGRFEIGGPMGDAGLTGRKIIIDTYGGMARHGGGAFSGKDPSKVDRSAAYAMRWVAKNVVAAGLASRCEVQVAYAIGKAEPVGLFVETFGTAKVEADKIEQAIATVFDLRPAAIIRDLDLLRPIYSQTAAYGHFGRELPDFTWERTDRVDALRTAVGL.

An ATP-binding site is contributed by His15. Asp17 contributes to the Mg(2+) binding site. K(+) is bound at residue Glu43. L-methionine is bound by residues Glu56 and Gln99. A flexible loop region spans residues 99–109 (QSPDIAQGVDT). ATP-binding positions include 174–176 (DGK), 247–248 (RF), Asp256, 262–263 (RK), Ala279, and Lys283. Asp256 serves as a coordination point for L-methionine. Residue Lys287 coordinates L-methionine.

Belongs to the AdoMet synthase family. As to quaternary structure, homotetramer; dimer of dimers. Mg(2+) serves as cofactor. It depends on K(+) as a cofactor.

Its subcellular location is the cytoplasm. It catalyses the reaction L-methionine + ATP + H2O = S-adenosyl-L-methionine + phosphate + diphosphate. The protein operates within amino-acid biosynthesis; S-adenosyl-L-methionine biosynthesis; S-adenosyl-L-methionine from L-methionine: step 1/1. Its function is as follows. Catalyzes the formation of S-adenosylmethionine (AdoMet) from methionine and ATP. The overall synthetic reaction is composed of two sequential steps, AdoMet formation and the subsequent tripolyphosphate hydrolysis which occurs prior to release of AdoMet from the enzyme. This is S-adenosylmethionine synthase from Streptomyces avermitilis (strain ATCC 31267 / DSM 46492 / JCM 5070 / NBRC 14893 / NCIMB 12804 / NRRL 8165 / MA-4680).